The chain runs to 185 residues: Elongation factor P (185 aa).

This sequence belongs to the elongation factor P family.

It is found in the cytoplasm. Its pathway is protein biosynthesis; polypeptide chain elongation. Involved in peptide bond synthesis. Stimulates efficient translation and peptide-bond synthesis on native or reconstituted 70S ribosomes in vitro. Probably functions indirectly by altering the affinity of the ribosome for aminoacyl-tRNA, thus increasing their reactivity as acceptors for peptidyl transferase. This Thermosipho africanus (strain TCF52B) protein is Elongation factor P.